The following is a 228-amino-acid chain: MSRILFKILAALVAAFLLYNLWVLGHIIYWRDHNPGASSFMNEQLARLQQDDPEAELRHKWVPYDKISPNLKRALIASEDARFVDHEGFDWDGIEAAFEKNLKKGKIVAGGSTISQQLAKNLFLSSGKTPWRKLEEALITVMLETVLDKRRIYEIYLNVIEWGNGVFGAEAASRYYFRTGASRLSSSQAAKLAAMVPNPRYYDEHRNAPGLARKTRIIQRRMAYVELP.

A helical transmembrane segment spans residues 8 to 28 (ILAALVAAFLLYNLWVLGHII).

Belongs to the glycosyltransferase 51 family.

It localises to the cell inner membrane. The catalysed reaction is [GlcNAc-(1-&gt;4)-Mur2Ac(oyl-L-Ala-gamma-D-Glu-L-Lys-D-Ala-D-Ala)](n)-di-trans,octa-cis-undecaprenyl diphosphate + beta-D-GlcNAc-(1-&gt;4)-Mur2Ac(oyl-L-Ala-gamma-D-Glu-L-Lys-D-Ala-D-Ala)-di-trans,octa-cis-undecaprenyl diphosphate = [GlcNAc-(1-&gt;4)-Mur2Ac(oyl-L-Ala-gamma-D-Glu-L-Lys-D-Ala-D-Ala)](n+1)-di-trans,octa-cis-undecaprenyl diphosphate + di-trans,octa-cis-undecaprenyl diphosphate + H(+). It functions in the pathway cell wall biogenesis; peptidoglycan biosynthesis. Functionally, peptidoglycan polymerase that catalyzes glycan chain elongation from lipid-linked precursors. The protein is Biosynthetic peptidoglycan transglycosylase of Chromobacterium violaceum (strain ATCC 12472 / DSM 30191 / JCM 1249 / CCUG 213 / NBRC 12614 / NCIMB 9131 / NCTC 9757 / MK).